We begin with the raw amino-acid sequence, 244 residues long: tRNA uridine(34) hydroxylase (244 aa).

The 91-residue stretch at 129–219 (QGRELVMLDT…GILKYFEETD (91 aa)) folds into the Rhodanese domain. Cys-183 serves as the catalytic Cysteine persulfide intermediate.

This sequence belongs to the TrhO family.

The enzyme catalyses uridine(34) in tRNA + AH2 + O2 = 5-hydroxyuridine(34) in tRNA + A + H2O. Catalyzes oxygen-dependent 5-hydroxyuridine (ho5U) modification at position 34 in tRNAs. The polypeptide is tRNA uridine(34) hydroxylase (Bordetella bronchiseptica (strain ATCC BAA-588 / NCTC 13252 / RB50) (Alcaligenes bronchisepticus)).